A 483-amino-acid polypeptide reads, in one-letter code: Rhamnulokinase (483 aa).

Position 11-15 (11-15 (ASSGR)) interacts with ATP. Substrate-binding positions include G79 and 234-236 (HDT). The active-site Proton acceptor is D235. Residue T257 participates in ATP binding. N294 is a substrate binding site. Residue Q302 coordinates ATP. A disulfide bridge links C352 with C369. ATP is bound at residue G401.

Belongs to the rhamnulokinase family. The cofactor is Mg(2+).

It carries out the reaction L-rhamnulose + ATP = L-rhamnulose 1-phosphate + ADP + H(+). It participates in carbohydrate degradation; L-rhamnose degradation; glycerone phosphate from L-rhamnose: step 2/3. Its function is as follows. Involved in the catabolism of L-rhamnose (6-deoxy-L-mannose). Catalyzes the transfer of the gamma-phosphate group from ATP to the 1-hydroxyl group of L-rhamnulose to yield L-rhamnulose 1-phosphate. The sequence is that of Rhamnulokinase from Listeria monocytogenes serotype 4b (strain CLIP80459).